Here is a 349-residue protein sequence, read N- to C-terminus: Phosphate acyltransferase (349 aa).

This sequence belongs to the PlsX family. In terms of assembly, homodimer. Probably interacts with PlsY.

It localises to the cytoplasm. The enzyme catalyses a fatty acyl-[ACP] + phosphate = an acyl phosphate + holo-[ACP]. The protein operates within lipid metabolism; phospholipid metabolism. Its function is as follows. Catalyzes the reversible formation of acyl-phosphate (acyl-PO(4)) from acyl-[acyl-carrier-protein] (acyl-ACP). This enzyme utilizes acyl-ACP as fatty acyl donor, but not acyl-CoA. The sequence is that of Phosphate acyltransferase from Akkermansia muciniphila (strain ATCC BAA-835 / DSM 22959 / JCM 33894 / BCRC 81048 / CCUG 64013 / CIP 107961 / Muc).